The sequence spans 298 residues: Large ribosomal subunit protein uL18 (298 aa).

The protein belongs to the universal ribosomal protein uL18 family. In terms of assembly, component of the large ribosomal subunit. Mature ribosomes consist of a small (40S) and a large (60S) subunit. The 40S subunit contains about 32 different proteins and 1 molecule of RNA (18S). The 60S subunit contains 45 different proteins and 3 molecules of RNA (25S, 5.8S and 5S).

It localises to the cytoplasm. Component of the ribosome, a large ribonucleoprotein complex responsible for the synthesis of proteins in the cell. The small ribosomal subunit (SSU) binds messenger RNAs (mRNAs) and translates the encoded message by selecting cognate aminoacyl-transfer RNA (tRNA) molecules. The large subunit (LSU) contains the ribosomal catalytic site termed the peptidyl transferase center (PTC), which catalyzes the formation of peptide bonds, thereby polymerizing the amino acids delivered by tRNAs into a polypeptide chain. The nascent polypeptides leave the ribosome through a tunnel in the LSU and interact with protein factors that function in enzymatic processing, targeting, and the membrane insertion of nascent chains at the exit of the ribosomal tunnel. This is Large ribosomal subunit protein uL18 from Candida albicans (strain SC5314 / ATCC MYA-2876) (Yeast).